Reading from the N-terminus, the 104-residue chain is Large ribosomal subunit protein bL21 (104 aa).

Belongs to the bacterial ribosomal protein bL21 family. As to quaternary structure, part of the 50S ribosomal subunit. Contacts protein L20.

In terms of biological role, this protein binds to 23S rRNA in the presence of protein L20. The protein is Large ribosomal subunit protein bL21 of Helicobacter pylori (strain P12).